Reading from the N-terminus, the 627-residue chain is uncharacterized protein (627 aa).

Disordered regions lie at residues Leu141–Ser187 and Glu490–Thr510. Residues Asn491–Thr510 are compositionally biased toward polar residues. Residue Ser559 is modified to Phosphoserine.

This is an uncharacterized protein from Saccharomyces cerevisiae (strain ATCC 204508 / S288c) (Baker's yeast).